We begin with the raw amino-acid sequence, 179 residues long: Large ribosomal subunit protein uL5 (179 aa).

It belongs to the universal ribosomal protein uL5 family. Part of the 50S ribosomal subunit; part of the 5S rRNA/L5/L18/L25 subcomplex. Contacts the 5S rRNA and the P site tRNA. Forms a bridge to the 30S subunit in the 70S ribosome.

Its function is as follows. This is one of the proteins that bind and probably mediate the attachment of the 5S RNA into the large ribosomal subunit, where it forms part of the central protuberance. In the 70S ribosome it contacts protein S13 of the 30S subunit (bridge B1b), connecting the 2 subunits; this bridge is implicated in subunit movement. Contacts the P site tRNA; the 5S rRNA and some of its associated proteins might help stabilize positioning of ribosome-bound tRNAs. This chain is Large ribosomal subunit protein uL5, found in Shewanella frigidimarina (strain NCIMB 400).